A 290-amino-acid polypeptide reads, in one-letter code: Small ribosomal subunit biogenesis GTPase RsgA (290 aa).

In terms of domain architecture, CP-type G spans 62-213 (KNSLVRPPIV…IADTPGFSSL (152 aa)). Residues 111–114 (SKTD) and 156–164 (GQTGVGKTT) contribute to the GTP site. The Zn(2+) site is built by C237, C242, H244, and C250.

Belongs to the TRAFAC class YlqF/YawG GTPase family. RsgA subfamily. Monomer. Associates with 30S ribosomal subunit, binds 16S rRNA. Zn(2+) serves as cofactor.

Its subcellular location is the cytoplasm. In terms of biological role, one of several proteins that assist in the late maturation steps of the functional core of the 30S ribosomal subunit. Helps release RbfA from mature subunits. May play a role in the assembly of ribosomal proteins into the subunit. Circularly permuted GTPase that catalyzes slow GTP hydrolysis, GTPase activity is stimulated by the 30S ribosomal subunit. The polypeptide is Small ribosomal subunit biogenesis GTPase RsgA (Streptococcus mutans serotype c (strain ATCC 700610 / UA159)).